We begin with the raw amino-acid sequence, 189 residues long: Probable nicotinate-nucleotide adenylyltransferase (189 aa).

Belongs to the NadD family.

The catalysed reaction is nicotinate beta-D-ribonucleotide + ATP + H(+) = deamido-NAD(+) + diphosphate. The protein operates within cofactor biosynthesis; NAD(+) biosynthesis; deamido-NAD(+) from nicotinate D-ribonucleotide: step 1/1. Its function is as follows. Catalyzes the reversible adenylation of nicotinate mononucleotide (NaMN) to nicotinic acid adenine dinucleotide (NaAD). This chain is Probable nicotinate-nucleotide adenylyltransferase, found in Bacillus cereus (strain AH187).